Here is a 28-residue protein sequence, read N- to C-terminus: Alpha-(1-6)-linked fucose-specific lectin (28 aa).

In terms of assembly, homohexamer. As to expression, expressed by mycelium-forming spores.

Its subcellular location is the secreted. In terms of biological role, alpha-(1-6)-linked L-fucose specific lectin. The sequence is that of Alpha-(1-6)-linked fucose-specific lectin from Rhizopus stolonifer (Rhizopus nigricans).